Consider the following 252-residue polypeptide: Ubiquinone/menaquinone biosynthesis C-methyltransferase UbiE (252 aa).

Residues Thr-75, Asp-96, and 123 to 124 (NA) each bind S-adenosyl-L-methionine.

It belongs to the class I-like SAM-binding methyltransferase superfamily. MenG/UbiE family.

The catalysed reaction is a 2-demethylmenaquinol + S-adenosyl-L-methionine = a menaquinol + S-adenosyl-L-homocysteine + H(+). The enzyme catalyses a 2-methoxy-6-(all-trans-polyprenyl)benzene-1,4-diol + S-adenosyl-L-methionine = a 5-methoxy-2-methyl-3-(all-trans-polyprenyl)benzene-1,4-diol + S-adenosyl-L-homocysteine + H(+). The protein operates within quinol/quinone metabolism; menaquinone biosynthesis; menaquinol from 1,4-dihydroxy-2-naphthoate: step 2/2. It functions in the pathway cofactor biosynthesis; ubiquinone biosynthesis. In terms of biological role, methyltransferase required for the conversion of demethylmenaquinol (DMKH2) to menaquinol (MKH2) and the conversion of 2-polyprenyl-6-methoxy-1,4-benzoquinol (DDMQH2) to 2-polyprenyl-3-methyl-6-methoxy-1,4-benzoquinol (DMQH2). This is Ubiquinone/menaquinone biosynthesis C-methyltransferase UbiE from Methylobacterium nodulans (strain LMG 21967 / CNCM I-2342 / ORS 2060).